Here is a 261-residue protein sequence, read N- to C-terminus: Probable membrane transporter protein XF_0764 (261 aa).

Transmembrane regions (helical) follow at residues 6 to 26 (LIVT…LGGG), 29 to 49 (ILAT…IAIG), 78 to 98 (VIFA…GMLI), 99 to 119 (DGQR…LLML), 150 to 170 (AASG…LIFA), 175 to 195 (TINA…ITTL), 205 to 225 (WTIA…GTLL), and 239 to 259 (VFGL…WASL).

This sequence belongs to the 4-toluene sulfonate uptake permease (TSUP) (TC 2.A.102) family.

It localises to the cell membrane. The chain is Probable membrane transporter protein XF_0764 from Xylella fastidiosa (strain 9a5c).